The sequence spans 779 residues: Filament-like plant protein 1 (779 aa).

The segment covering 1–14 has biased composition (basic and acidic residues); the sequence is MEKRKRESSERSFG. 3 disordered regions span residues 1–55, 253–274, and 315–336; these read MEKR…ETEK, ASFNDHRSTDSHSDGGERMDVS, and PETPDGNGKSGPESVTEEVVVP. The stretch at 47-200 forms a coiled coil; that stretch reads VSLEVETEKE…KENVMLRHEL (154 aa). The segment covering 256 to 272 has biased composition (basic and acidic residues); that stretch reads NDHRSTDSHSDGGERMD. Positions 324-336 are enriched in low complexity; the sequence is SGPESVTEEVVVP. The stretch at 337–674 forms a coiled coil; it reads SENSLASEIE…ANCQKTIASL (338 aa). Over residues 718–731 the composition is skewed to basic and acidic residues; sequence FMTRNHPESIKPTK. The interval 718 to 764 is disordered; the sequence is FMTRNHPESIKPTKETSPSSSSSTASAAVSMPVSTNRGSSEKNRNGF. Residues 733 to 752 are compositionally biased toward low complexity; it reads TSPSSSSSTASAAVSMPVST.

Belongs to the FPP family. As to quaternary structure, interacts with WPP/MAF proteins.

This chain is Filament-like plant protein 1 (FPP1), found in Arabidopsis thaliana (Mouse-ear cress).